Here is a 463-residue protein sequence, read N- to C-terminus: Cysteine--tRNA ligase (463 aa).

A Zn(2+)-binding site is contributed by cysteine 30. Positions 32-42 match the 'HIGH' region motif; it reads MTVYDYCHVGH. 3 residues coordinate Zn(2+): cysteine 214, histidine 239, and glutamate 243. The 'KMSKS' region signature appears at 271–275; sequence KMSKS. Lysine 274 lines the ATP pocket.

Belongs to the class-I aminoacyl-tRNA synthetase family. In terms of assembly, monomer. Zn(2+) is required as a cofactor.

It localises to the cytoplasm. It carries out the reaction tRNA(Cys) + L-cysteine + ATP = L-cysteinyl-tRNA(Cys) + AMP + diphosphate. The sequence is that of Cysteine--tRNA ligase from Ralstonia pickettii (strain 12J).